Reading from the N-terminus, the 319-residue chain is tRNA uridine(34) hydroxylase (319 aa).

Residues 127 to 221 (KQEDTVIIDA…YGKDPEVQGE (95 aa)) form the Rhodanese domain. The Cysteine persulfide intermediate role is filled by C181.

It belongs to the TrhO family.

It catalyses the reaction uridine(34) in tRNA + AH2 + O2 = 5-hydroxyuridine(34) in tRNA + A + H2O. Catalyzes oxygen-dependent 5-hydroxyuridine (ho5U) modification at position 34 in tRNAs. The sequence is that of tRNA uridine(34) hydroxylase from Bacillus cereus (strain B4264).